Reading from the N-terminus, the 149-residue chain is Small heat shock protein IbpB (149 aa).

In terms of domain architecture, sHSP spans 26-137; that stretch reads SQEPIDFPPY…QPQRIAIGGG (112 aa).

It belongs to the small heat shock protein (HSP20) family. Homodimer. Forms homomultimers of about 100-150 subunits at optimal growth temperatures. Conformation changes to oligomers at high temperatures or high ionic concentrations. The decrease in size of the multimers is accompanied by an increase in chaperone activity.

The protein localises to the cytoplasm. Functionally, associates with aggregated proteins, together with IbpA, to stabilize and protect them from irreversible denaturation and extensive proteolysis during heat shock and oxidative stress. Aggregated proteins bound to the IbpAB complex are more efficiently refolded and reactivated by the ATP-dependent chaperone systems ClpB and DnaK/DnaJ/GrpE. Its activity is ATP-independent. This is Small heat shock protein IbpB from Pectobacterium carotovorum subsp. carotovorum (strain PC1).